Consider the following 184-residue polypeptide: Peptide deformylase (184 aa).

Fe cation is bound by residues cysteine 111 and histidine 154. Glutamate 155 is an active-site residue. Residue histidine 158 participates in Fe cation binding.

This sequence belongs to the polypeptide deformylase family. Fe(2+) serves as cofactor.

It carries out the reaction N-terminal N-formyl-L-methionyl-[peptide] + H2O = N-terminal L-methionyl-[peptide] + formate. In terms of biological role, removes the formyl group from the N-terminal Met of newly synthesized proteins. Requires at least a dipeptide for an efficient rate of reaction. N-terminal L-methionine is a prerequisite for activity but the enzyme has broad specificity at other positions. The protein is Peptide deformylase of Macrococcus caseolyticus (strain JCSC5402) (Macrococcoides caseolyticum).